Here is a 293-residue protein sequence, read N- to C-terminus: Homoserine kinase (293 aa).

An ATP-binding site is contributed by 84–94 (PLSRGLGSSSA).

This sequence belongs to the GHMP kinase family. Homoserine kinase subfamily.

It is found in the cytoplasm. The enzyme catalyses L-homoserine + ATP = O-phospho-L-homoserine + ADP + H(+). The protein operates within amino-acid biosynthesis; L-threonine biosynthesis; L-threonine from L-aspartate: step 4/5. Catalyzes the ATP-dependent phosphorylation of L-homoserine to L-homoserine phosphate. This Nautilia profundicola (strain ATCC BAA-1463 / DSM 18972 / AmH) protein is Homoserine kinase.